A 188-amino-acid chain; its full sequence is Peptidyl-tRNA hydrolase (188 aa).

A tRNA-binding site is contributed by Tyr-14. The active-site Proton acceptor is the His-19. TRNA-binding residues include Tyr-64, Asn-66, and Asn-112.

This sequence belongs to the PTH family. As to quaternary structure, monomer.

It localises to the cytoplasm. It catalyses the reaction an N-acyl-L-alpha-aminoacyl-tRNA + H2O = an N-acyl-L-amino acid + a tRNA + H(+). Its function is as follows. Hydrolyzes ribosome-free peptidyl-tRNAs (with 1 or more amino acids incorporated), which drop off the ribosome during protein synthesis, or as a result of ribosome stalling. In terms of biological role, catalyzes the release of premature peptidyl moieties from peptidyl-tRNA molecules trapped in stalled 50S ribosomal subunits, and thus maintains levels of free tRNAs and 50S ribosomes. This is Peptidyl-tRNA hydrolase from Clostridium perfringens (strain SM101 / Type A).